A 60-amino-acid chain; its full sequence is MATKTIKVTQTKSSIGRLPKHRASLLGLGLRRINHTVEVEDTPSVRGMINKVYYMVKVED.

This sequence belongs to the universal ribosomal protein uL30 family. Part of the 50S ribosomal subunit.

The sequence is that of Large ribosomal subunit protein uL30 from Shewanella woodyi (strain ATCC 51908 / MS32).